Here is a 211-residue protein sequence, read N- to C-terminus: Large ribosomal subunit protein uL4 (211 aa).

Polar residues predominate over residues 41–53 (QAHSRQGTASTLT). Positions 41-85 (QAHSRQGTASTLTRAEVRGGGRKPYKQKGTGRARQGSIRTPLRPG) are disordered. Residues 60-71 (GGRKPYKQKGTG) show a composition bias toward basic residues.

The protein belongs to the universal ribosomal protein uL4 family. Part of the 50S ribosomal subunit.

Its function is as follows. One of the primary rRNA binding proteins, this protein initially binds near the 5'-end of the 23S rRNA. It is important during the early stages of 50S assembly. It makes multiple contacts with different domains of the 23S rRNA in the assembled 50S subunit and ribosome. Forms part of the polypeptide exit tunnel. The chain is Large ribosomal subunit protein uL4 from Prochlorococcus marinus (strain SARG / CCMP1375 / SS120).